We begin with the raw amino-acid sequence, 507 residues long: RNA polymerase I-specific transcription initiation factor RRN11 (507 aa).

A compositionally biased stretch (polar residues) spans K37–P47. 2 disordered regions span residues K37–K76 and G89–E124. Residues S97–E108 are compositionally biased toward acidic residues. Residues G109–E124 show a composition bias toward basic and acidic residues.

In terms of assembly, component of the core factor (CF) complex, which consists of RRN6, RRN7 and RRN11. The CF heterotrimer may further dimerize to form a hexamer. RRN11 interacts with RRN6, RRN7 and SPT15.

It localises to the nucleus. The protein localises to the nucleolus. Functionally, acts as a component of the core factor (CF) complex which is essential for the initiation of rDNA transcription by RNA polymerase I. After binding of UAF (upstream activation factor) to an upstream element of the promoter, CF is recruited in a SPT15/TBP-dependent manner to form a preinitiation complex. The sequence is that of RNA polymerase I-specific transcription initiation factor RRN11 (RRN11) from Saccharomyces cerevisiae (strain ATCC 204508 / S288c) (Baker's yeast).